We begin with the raw amino-acid sequence, 277 residues long: Sulfur carrier protein FdhD (277 aa).

Cys121 functions as the Cysteine persulfide intermediate in the catalytic mechanism. 260 to 265 (FCKPGR) lines the Mo-bis(molybdopterin guanine dinucleotide) pocket.

Belongs to the FdhD family.

It localises to the cytoplasm. Required for formate dehydrogenase (FDH) activity. Acts as a sulfur carrier protein that transfers sulfur from IscS to the molybdenum cofactor prior to its insertion into FDH. In Shigella dysenteriae serotype 1 (strain Sd197), this protein is Sulfur carrier protein FdhD.